Here is a 293-residue protein sequence, read N- to C-terminus: 4-hydroxybenzoate octaprenyltransferase (293 aa).

The next 8 membrane-spanning stretches (helical) occupy residues 26–48, 98–118, 122–142, 145–165, 167–187, 218–238, 241–261, and 272–292; these read PIGTLLLLYPTLWALFAAAGGMP, TEAKILFVLLLCIAFVLDLLL, TFLLSFVAVALAIIYPFMKRF, LPQVVLGMAFGWAIPMAYGAV, ESLPLECWLLFFANIFWTVAY, IIALLQFITLVLLVIFGWISQ, WGYFVVLGLSASLFSHQCWLT, and AFLNNHYFGLGVFFAILVGIY.

This sequence belongs to the UbiA prenyltransferase family. Requires Mg(2+) as cofactor.

Its subcellular location is the cell inner membrane. It carries out the reaction all-trans-octaprenyl diphosphate + 4-hydroxybenzoate = 4-hydroxy-3-(all-trans-octaprenyl)benzoate + diphosphate. The protein operates within cofactor biosynthesis; ubiquinone biosynthesis. In terms of biological role, catalyzes the prenylation of para-hydroxybenzoate (PHB) with an all-trans polyprenyl group. Mediates the second step in the final reaction sequence of ubiquinone-8 (UQ-8) biosynthesis, which is the condensation of the polyisoprenoid side chain with PHB, generating the first membrane-bound Q intermediate 3-octaprenyl-4-hydroxybenzoate. The sequence is that of 4-hydroxybenzoate octaprenyltransferase from Actinobacillus pleuropneumoniae serotype 3 (strain JL03).